Here is a 161-residue protein sequence, read N- to C-terminus: Troponin C, slow skeletal and cardiac muscles (161 aa).

Met-1 carries the N-acetylmethionine modification. 4 EF-hand domains span residues 16–51, 52–87, 92–127, and 128–161; these read QKNEFKAAFDIFVLGAEDGCISTKELGKVMRMLGQN, PTPEELQEMIDEVDEDGSGTVDFDEFLVMMVRCMKD, KSEEELSDLFRMFDKNADGYIDLEELKIMLQATGET, and ITEDDIEELMKDGDKNNDGRIDYDEFLEFMKGVE. Residues Asp-65, Asp-67, Ser-69, Thr-71, and Glu-76 each contribute to the Ca(2+) site. Ser-98 is subject to Phosphoserine. Ca(2+) is bound by residues Asp-105, Asn-107, Asp-109, Tyr-111, Glu-116, Asp-141, Asn-143, Asp-145, Arg-147, and Glu-152.

The protein belongs to the troponin C family.

In terms of biological role, troponin is the central regulatory protein of striated muscle contraction. Tn consists of three components: Tn-I which is the inhibitor of actomyosin ATPase, Tn-T which contains the binding site for tropomyosin and Tn-C. The binding of calcium to Tn-C abolishes the inhibitory action of Tn on actin filaments. The sequence is that of Troponin C, slow skeletal and cardiac muscles (TNNC1) from Bos taurus (Bovine).